The primary structure comprises 370 residues: Vasopressin V2 receptor (370 aa).

Positions 1–10 are enriched in polar residues; sequence MLLASTTSAV. Residues 1–26 form a disordered region; the sequence is MLLASTTSAVPRTLSPPTPAGNGSRE. Residues 1–37 are Extracellular-facing; sequence MLLASTTSAVPRTLSPPTPAGNGSRELLDTRDPLLVQ. N22 carries N-linked (GlcNAc...) asparagine glycosylation. Residues 38-62 traverse the membrane as a helical segment; the sequence is AELALLSTVFVAVALSNGLVLGALA. Residues 63–76 are Cytoplasmic-facing; it reads RRVRRGRWAPMHVF. Residues 77–97 form a helical membrane-spanning segment; it reads IGHLCLADLAVALFQVLPQLA. Residues 98 to 112 lie on the Extracellular side of the membrane; that stretch reads WDATDRFRGPDALCR. A helical membrane pass occupies residues 113–134; it reads AVKYLQMVGMYASSYMILAMTL. The Cytoplasmic segment spans residues 135–158; that stretch reads DRHRAICRPMLAYRHGGGARWNRP. Residues 159-179 traverse the membrane as a helical segment; the sequence is VLVAWAFSLILSLPQLFIFAQ. The Extracellular portion of the chain corresponds to 180 to 199; the sequence is RDVGNGSGVLDCWAHFAEPW. The helical transmembrane segment at 200-219 threads the bilayer; the sequence is GLRAYVTWIALMVFVAPALG. The Cytoplasmic segment spans residues 220 to 270; sequence IAACQVLIFREIHSSLVPGPAERAGGCRGGHRTGSPSEGARVSAAMAKTVR. Residues 271–292 traverse the membrane as a helical segment; it reads MTLVIVIVYVLCWAPFFLVQLW. The Extracellular segment spans residues 293–307; the sequence is AAWDPQAPLEGAPFV. The chain crosses the membrane as a helical span at residues 308–327; it reads LLMLLASLNSCTNPWIYAFF. At 328–370 the chain is on the cytoplasmic side; sequence SSSVSSELRSLFCWARSRAPPSLGPQEESCATASSFLAKDTSS. C340 carries S-palmitoyl cysteine lipidation.

It belongs to the G-protein coupled receptor 1 family. Vasopressin/oxytocin receptor subfamily. Interacts with ARRDC4. Identified in a complex containing at least ARRDC4, V2R and HGS. Interacts with TMEM147.

Its subcellular location is the cell membrane. Functionally, receptor for arginine vasopressin. The activity of this receptor is mediated by G proteins which activate adenylate cyclase. Involved in renal water reabsorption. This Canis lupus familiaris (Dog) protein is Vasopressin V2 receptor (AVPR2).